A 360-amino-acid chain; its full sequence is MRTELFDFDLPASSIALRPVSPRDAARMLVVRPGATLEDRAVRDLPALLQPGDQLVVNDTRVIAAQLTGRRIGRATEPRIEATLIKRLDGSRWQALVKPAKKLAEGDVVRFGHDGRVCLLGHLDATVEAKGDAGEVTLAFTFHGPALDQAIAELGATPLPPYIASKRTPDDQDAADYQTMFAANEGAVAAPTAGLHFTPELDAALKARGVTLHRLTLHVGAGTFLPVKVDDTAEHKMHAEWGTISEATADALNAARAQGGRIVAVGTTSLRLLESAAREDGTIAPFADETAIFITPGYRFRAVDALMTNFHLPRSTLFMLVSAFCGLETMQAAYRHAIDSGYRFYSYGDASLLFREPASR.

Belongs to the QueA family. Monomer.

It is found in the cytoplasm. It carries out the reaction 7-aminomethyl-7-carbaguanosine(34) in tRNA + S-adenosyl-L-methionine = epoxyqueuosine(34) in tRNA + adenine + L-methionine + 2 H(+). The protein operates within tRNA modification; tRNA-queuosine biosynthesis. In terms of biological role, transfers and isomerizes the ribose moiety from AdoMet to the 7-aminomethyl group of 7-deazaguanine (preQ1-tRNA) to give epoxyqueuosine (oQ-tRNA). The chain is S-adenosylmethionine:tRNA ribosyltransferase-isomerase from Rhodopseudomonas palustris (strain BisB5).